We begin with the raw amino-acid sequence, 213 residues long: Peptide methionine sulfoxide reductase MsrA (213 aa).

Cys52 is a catalytic residue.

It belongs to the MsrA Met sulfoxide reductase family.

The enzyme catalyses L-methionyl-[protein] + [thioredoxin]-disulfide + H2O = L-methionyl-(S)-S-oxide-[protein] + [thioredoxin]-dithiol. It catalyses the reaction [thioredoxin]-disulfide + L-methionine + H2O = L-methionine (S)-S-oxide + [thioredoxin]-dithiol. Functionally, has an important function as a repair enzyme for proteins that have been inactivated by oxidation. Catalyzes the reversible oxidation-reduction of methionine sulfoxide in proteins to methionine. The chain is Peptide methionine sulfoxide reductase MsrA from Enterobacter sp. (strain 638).